A 555-amino-acid chain; its full sequence is Cytochrome P450 78A11 (555 aa).

Residues 12 to 32 (VDATWWAYALPALLGADTLCA) traverse the membrane as a helical segment. A heme-binding site is contributed by Cys-495.

The protein belongs to the cytochrome P450 family. The cofactor is heme. In terms of tissue distribution, expressed in seedlings, shoot apices and young panicles, but not in mature leaves, calli and roots.

Its subcellular location is the membrane. Its function is as follows. Involved in the regular timing (plastochron) of lateral organs formation. May regulate the rate of leaf initiation and the duration of vegetative phase. Seems to be redundant to the function of PLASTOCHRON2, but to act in an independent pathway. The sequence is that of Cytochrome P450 78A11 (CYP78A11) from Oryza sativa subsp. japonica (Rice).